Here is a 363-residue protein sequence, read N- to C-terminus: NAD(P)H-quinone oxidoreductase subunit 1, chloroplastic (363 aa).

The next 6 helical transmembrane spans lie at 27-47, 104-124, 127-147, 248-268, 300-320, and 343-363; these read VWLLIPIFILVLGIVIGVLVI, IAVIAILLSYLVIPFGYHLVL, LSIGVFLWIAISSIAPIGLLM, YSGIKFGLFYVASYLNLLVSS, VFGMTIGIFITLAKAYLFLFI, and FLLPISLGNLLLTTSFQLFSL.

Belongs to the complex I subunit 1 family. As to quaternary structure, NDH is composed of at least 16 different subunits, 5 of which are encoded in the nucleus.

The protein localises to the plastid. Its subcellular location is the chloroplast thylakoid membrane. It catalyses the reaction a plastoquinone + NADH + (n+1) H(+)(in) = a plastoquinol + NAD(+) + n H(+)(out). The enzyme catalyses a plastoquinone + NADPH + (n+1) H(+)(in) = a plastoquinol + NADP(+) + n H(+)(out). NDH shuttles electrons from NAD(P)H:plastoquinone, via FMN and iron-sulfur (Fe-S) centers, to quinones in the photosynthetic chain and possibly in a chloroplast respiratory chain. The immediate electron acceptor for the enzyme in this species is believed to be plastoquinone. Couples the redox reaction to proton translocation, and thus conserves the redox energy in a proton gradient. The sequence is that of NAD(P)H-quinone oxidoreductase subunit 1, chloroplastic from Ranunculus macranthus (Large buttercup).